The primary structure comprises 963 residues: Spliceosome associated factor 3, U4/U6 recycling protein (963 aa).

A compositionally biased stretch (low complexity) spans 1–11 (MATAAATSASE). Disordered stretches follow at residues 1–36 (MATAAATSASEPEAESKAGPKADGEEDEVKAARTRR) and 49–86 (KTMGPGWDQQEEGVSESDGDEYAMASSAESSPGEYEWE). Ala2 is modified (N-acetylalanine). The segment at 2–351 (ATAAATSASE…LVPDLWIRYS (350 aa)) is mediates interaction with PRPF3. Phosphoserine occurs at positions 10 and 16. Over residues 14-23 (AESKAGPKAD) the composition is skewed to basic and acidic residues. A coiled-coil region spans residues 21 to 46 (KADGEEDEVKAARTRRKVLSRAVAAA). The segment covering 57–69 (QQEEGVSESDGDE) has biased composition (acidic residues). A coiled-coil region spans residues 82-110 (EYEWEYDEEEEKNQLEIERLEEQLSINVY). HAT repeat units follow at residues 126–158 (GELTKVRMARQKMSEIFPLTEELWLEWLHDEIS), 164–195 (LDREHVYDLFEKAVKDYICPNIWLEYGQYSVG), 201–237 (GGLEKVRSVFERALSSVGLHMSKGLALWEAYREFESA), 242–275 (ARLEKVHSLFRRQLAIPLYDMEATFAEYEEWSED), 324–356 (GDPARIQLIFERALVENCLVPDLWIRYSQYLDR), 359–391 (KVKDLVLSVHNRAIRNCPWTVALWSRYLLAMER), 394–430 (VDHQVISVTFEKALNAGFIQATDYVEIWQAYLDYLRR), and 487–520 (NNMQKARELWDSIMTRGNAKYANMWLEYYNLERA). Ser215 carries the phosphoserine modification. Residues 487–520 (NNMQKARELWDSIMTRGNAKYANMWLEYYNLERA) are required for interaction with USP4. A necessary and sufficient for U6 snRNA binding region spans residues 537–953 (CTSDYPEHVC…AATEAPKMSN (417 aa)). Residues 559-619 (LEDWDIAVQK…ALKKKKKIRG (61 aa)) adopt a coiled-coil conformation. Positions 600 to 670 (QRKRARAEKK…EVAPGPAGKC (71 aa)) are required for nuclear localization. The short motif at 601 to 608 (RKRARAEK) is the Nuclear localization signal element. Over residues 608–619 (KKALKKKKKIRG) the composition is skewed to basic and acidic residues. The disordered stretch occupies residues 608 to 712 (KKALKKKKKI…SITVFVSNLP (105 aa)). Positions 620–635 (PEKRGADEDDEKEWGD) are enriched in basic residues. Over residues 644–657 (RRRVENSIPAAGET) the composition is skewed to acidic residues. Ser650 bears the Phosphoserine mark. Residue Thr657 is modified to Phosphothreonine. Residues 695 to 712 (VLHDSSKDSITVFVSNLP) show a composition bias toward basic and acidic residues. The RRM 1 domain maps to 704–782 (ITVFVSNLPY…RPMFVSPCVD (79 aa)). 3 positions are modified to phosphoserine: Ser769, Ser795, and Ser852. The RRM 2 domain maps to 801–878 (HKLFISGLPF…NVIKVAISNP (78 aa)). Basic and acidic residues predominate over residues 900 to 909 (PQTYGARGKG). Omega-N-methylarginine is present on Arg906.

As to quaternary structure, component of the 7SK snRNP complex at least composed of P-TEFb (composed of CDK9 and CCNT1/cyclin-T1), HEXIM1, HEXIM2, BCDIN3, SART3 proteins and 7SK and U6 snRNAs. Interacts with AGO1 and AGO2. Interacts with PRPF3 and USP4; the interaction with PRPF3 is direct and recruits USP4 to its substrate PRPF3. Interacts with USP15; the interaction is direct.

It localises to the nucleus. The protein resides in the nucleoplasm. It is found in the cajal body. Its subcellular location is the nucleus speckle. The protein localises to the cytoplasm. Its function is as follows. U6 snRNP-binding protein that functions as a recycling factor of the splicing machinery. Promotes the initial reassembly of U4 and U6 snRNPs following their ejection from the spliceosome during its maturation. Also binds U6atac snRNPs and may function as a recycling factor for U4atac/U6atac spliceosomal snRNP, an initial step in the assembly of U12-type spliceosomal complex. The U12-type spliceosomal complex plays a role in the splicing of introns with non-canonical splice sites. May also function as a substrate-targeting factor for deubiquitinases like USP4 and USP15. Recruits USP4 to ubiquitinated PRPF3 within the U4/U5/U6 tri-snRNP complex, promoting PRPF3 deubiquitination and thereby regulating the spliceosome U4/U5/U6 tri-snRNP spliceosomal complex disassembly. May also recruit the deubiquitinase USP15 to histone H2B and mediate histone deubiquitination, thereby regulating gene expression and/or DNA repair. May play a role in hematopoiesis probably through transcription regulation of specific genes including MYC. This chain is Spliceosome associated factor 3, U4/U6 recycling protein, found in Pongo abelii (Sumatran orangutan).